The primary structure comprises 398 residues: Cysteine protease ATG4A (398 aa).

Catalysis depends on Cys-77, which acts as the Nucleophile. Residues Asp-279 and His-281 contribute to the active site. Residues 393 to 396 (FEIL) carry the LIR motif.

This sequence belongs to the peptidase C54 family. As to quaternary structure, interacts with ATG9A; the interaction is direct.

The protein localises to the cytoplasm. The enzyme catalyses [protein]-C-terminal L-amino acid-glycyl-phosphatidylethanolamide + H2O = [protein]-C-terminal L-amino acid-glycine + a 1,2-diacyl-sn-glycero-3-phosphoethanolamine. Inhibited by N-ethylmaleimide. Redox-regulated during autophagy since reducing conditions activate ATG4A whereas an oxidizing environment such as the presence of H(2)O(2) inhibits its activity. Cysteine protease that plays a key role in autophagy by mediating both proteolytic activation and delipidation of ATG8 family proteins. The protease activity is required for proteolytic activation of ATG8 family proteins: cleaves the C-terminal amino acid of ATG8 proteins to reveal a C-terminal glycine. Exposure of the glycine at the C-terminus is essential for ATG8 proteins conjugation to phosphatidylethanolamine (PE) and insertion to membranes, which is necessary for autophagy. Preferred substrate is GABARAPL2 followed by MAP1LC3A and GABARAP. Protease activity is also required to counteract formation of high-molecular weight conjugates of ATG8 proteins (ATG8ylation): acts as a deubiquitinating-like enzyme that removes ATG8 conjugated to other proteins, such as ATG3. In addition to the protease activity, also mediates delipidation of ATG8 family proteins. Catalyzes delipidation of PE-conjugated forms of ATG8 proteins during macroautophagy. Compared to ATG4B, the major protein for proteolytic activation of ATG8 proteins, shows weaker ability to cleave the C-terminal amino acid of ATG8 proteins, while it displays stronger delipidation activity. Involved in phagophore growth during mitophagy independently of its protease activity and of ATG8 proteins: acts by regulating ATG9A trafficking to mitochondria and promoting phagophore-endoplasmic reticulum contacts during the lipid transfer phase of mitophagy. This chain is Cysteine protease ATG4A, found in Pongo abelii (Sumatran orangutan).